The following is a 361-amino-acid chain: Putative agmatine deiminase (361 aa).

Cys354 acts as the Amidino-cysteine intermediate in catalysis.

The protein belongs to the agmatine deiminase family.

The catalysed reaction is agmatine + H2O = N-carbamoylputrescine + NH4(+). The sequence is that of Putative agmatine deiminase from Streptococcus pneumoniae (strain ATCC BAA-255 / R6).